A 366-amino-acid polypeptide reads, in one-letter code: MRDVFEMMDRYGHEQVIFCRHPQTGLKAIIALHNTTAGPALGGCRMIPYASTDEALEDVLRLSKGMTYKCSLADVDFGGGKMVIIGDPKKDKSPELFRVIGRFVGGLNGRFYTGTDMGTNPEDFVHAARESKSFAGLPKSYGGKGDTSIPTALGVFHGMRATARFLWGTDQLKGRVVAIQGVGKVGERLLQLLVEVGAYCKIADIDSVRCEQLKEKYGDKVQLVDVNRIHKESCDIFSPCAKGGVVNDDTIDEFRCLAIVGSANNQLVEDRHGALLQKRSICYAPDYLVNAGGLIQVADELEGFHEERVLAKTEAIYDMVLDIFHRAKNENITTCEAADRIVMERLKKLTDIRRILLEDPRNSARR.

Arg-45 contributes to the NAD(+) binding site. Lys-69 provides a ligand contact to L-phenylalanine. Residue Lys-81 is part of the active site. NAD(+)-binding positions include Asp-116, Thr-151, 181–187 (GVGKVGE), 204–205 (DI), 241–242 (AK), and 262–264 (SAN). Residue Asn-264 participates in L-phenylalanine binding.

Belongs to the Glu/Leu/Phe/Val dehydrogenases family.

The enzyme catalyses L-phenylalanine + NAD(+) + H2O = 3-phenylpyruvate + NH4(+) + NADH + H(+). The protein operates within amino-acid biosynthesis; L-phenylalanine biosynthesis; L-phenylalanine from phenylpyruvate (PDH route): step 1/1. Its function is as follows. Catalyzes the reversible NAD(+)-dependent oxidative deamination of L-phenylalanine to phenylpyruvate. This is Phenylalanine dehydrogenase from Thermoactinomyces intermedius.